Reading from the N-terminus, the 502-residue chain is 4,4'-diapophytoene desaturase (4,4'-diaponeurosporene-forming) (502 aa).

5–17 is a binding site for FAD; it reads VIGAGVTGLAAAA.

This sequence belongs to the carotenoid/retinoid oxidoreductase family. CrtN subfamily.

The catalysed reaction is 15-cis-4,4'-diapophytoene + 3 FAD + 3 H(+) = all-trans-4,4'-diaponeurosporene + 3 FADH2. The protein operates within carotenoid biosynthesis; staphyloxanthin biosynthesis; staphyloxanthin from farnesyl diphosphate: step 2/5. In terms of biological role, involved in the biosynthesis of the yellow-orange carotenoid staphyloxanthin, which plays a role in the virulence via its protective function against oxidative stress. Catalyzes three successive dehydrogenation reactions that lead to the introduction of three double bonds into 4,4'-diapophytoene (dehydrosqualene), with 4,4'-diapophytofluene and 4,4'-diapo-zeta-carotene as intermediates, and 4,4'-diaponeurosporene (the major deep-yellow pigment in staphylococci strains) as the end product. The polypeptide is 4,4'-diapophytoene desaturase (4,4'-diaponeurosporene-forming) (Staphylococcus aureus (strain MRSA252)).